Consider the following 48-residue polypeptide: uncharacterized protein (48 aa).

Residues 20–37 (ILASPLFFANYVLHAAIH) form a helical membrane-spanning segment.

The protein resides in the membrane. This is an uncharacterized protein from Saccharomyces cerevisiae (strain ATCC 204508 / S288c) (Baker's yeast).